The chain runs to 2879 residues: Peramine synthetase ppzA (2879 aa).

The span at 1 to 12 (MTYDEGGHRNNE) shows a compositional bias: basic and acidic residues. The tract at residues 1 to 52 (MTYDEGGHRNNEETPQDVNMSSNNEGMSTSSPTGSYGEIIGQATVSVPQEDQ) is disordered. A compositionally biased stretch (polar residues) spans 16–34 (QDVNMSSNNEGMSTSSPTG). Positions 351 to 747 (QEQCRLQPNT…VGRKDTQVKI (397 aa)) are adenylation 1. The Carrier 1 domain occupies 882 to 958 (QPLSDMERLL…DLSRQSKYIE (77 aa)). O-(pantetheine 4'-phosphoryl)serine is present on serine 919. The segment at 997-1410 (DAYPCTPLQE…ITILTTEDLE (414 aa)) is condensation. Positions 1433-1827 (DKVQHRPNAP…LSFVRRKDTT (395 aa)) are adenylation 2. The methylation (Met) domain stretch occupies residues 1958–2050 (LEIGCGSGMM…KYLVKLIQDI (93 aa)). The 79-residue stretch at 2370 to 2448 (WPTTDTGKEL…RLLLDCCCDD (79 aa)) folds into the Carrier 2 domain. Serine 2407 is modified (O-(pantetheine 4'-phosphoryl)serine). Residues 2500 to 2817 (TVLLTGANGF…LEDMLQDLDD (318 aa)) are thiesterase (TE) domain.

It belongs to the NRP synthetase family. The cofactor is pantetheine 4'-phosphate.

The enzyme catalyses (S)-1-pyrroline-5-carboxylate + L-arginine + S-adenosyl-L-methionine + 2 ATP = peramine + 2 AMP + S-adenosyl-L-homocysteine + 2 diphosphate + H2O + 2 H(+). It functions in the pathway secondary metabolite biosynthesis. In terms of biological role, nonribosomal peptide synthetase; part of the gene cluster that mediates the biosynthesis of pyrrolopyrazines, secondary metabolites showing insecticidal activity. The single multifunctional NRPS ppzA is responsible for the biosynthesis of peramine. The condensation domain of ppzA is proposed to catalyze formation of a peptide bond between 1-pyrroline-5-carboxylate and arginine. The methylation domain of ppzA would catalyze the N-methylation of the alpha-amino group of arginine. The reductase domain is proposed to be responsible for reduction of the thioester and the cyclization to form an iminium ion resulting in release from the peptide synthetase. Deprotonation of this intermediate and oxidation of the pyrroline ring would give rise to peramine. This final oxidation to give the pyrrole functionality may be spontaneous. In Epichloe species that produce only peramine, the peramine synthetase gene is not localized in a gene cluster, in contrast to Metarhizium species that contain additional pyrrolopyrazine biosynthesis genes. The 2-oxoglutarate-Fe(II) type oxidoreductase ppzC hydroxylates peramine to yield the newly identified compound 8-hydroxyperamine whereas ppzD converts L-proline into trans-4-hydroxy-L-proline, a precursor of peramine biosynthesis. This is Peramine synthetase ppzA from Metarhizium rileyi (strain RCEF 4871) (Nomuraea rileyi).